The chain runs to 793 residues: MAFNGYGIFDSDPRKNPSSDLRTQFWLAFLLGASACVFFCFFRKRWKVLYAPRTTIEGLNLPTLSSSYYKWLMDLVNIPDDVVQNCAGLDGYVFLLFFKMGIKFLSFASLLGVLIIMPVNKHFRGDAFGNITLSMPAKSEYFFSSPLVKKSIVQSPIIANGSELNVGVLGPSLFNPIGNLSDIPGLPQPGDGFLYLYVLFTYFISIFLLYVLFSSTKSIADIRQSYLARQNRLTDRTVFISGLPNELCSTENLKAYFDKLDVGSIDSLSICRNYSYMDILLSKKSKYVKKLEKYWSIYLSNCKKLGISTLPPSNYLSPNRAELESTPEQLLEVPWQHHQCHPLIKTHFFGIFGQKIDAIDFYSAKLYKISQQIENARSFDYPTTGQAFITFESMATAQIVAQTHIDSKSLMGLHIELAPAANDIQWHNTYIGRWHKFFQGWFITLVTFMIILLWTVPVGAIAVFINLDTIRRLWPELGRMIEDLPFLNSLLRTFLPTLVYSLFISISPFLFRWLSSMQGLSSRAEEEIYAVGKNYAYLFVNFFLVYVIAGSTSIWELAKDTTSFAHFLANRLPHQAQFFIDLIVLQGIGMFPLKLIQLGKLSSYFVRRSFVPYSIASKKFETPDSFSVGIFLPQPMFIMLICLCYSIISPLILVFGLIYFIIGFLVYKYELIYQMEHPQHSTGELWSTIFLRMIFGCVIMQLTMMGLMSLRKAYWLSTVIFPLLCFTVISAYNFSTMIRSSMQFVSLYYIRTHQSNTLSSESESRNSESSGSYVHPGFDLSNEELPLIDLNTA.

Residues 1–21 (MAFNGYGIFDSDPRKNPSSDL) are Lumenal-facing. Residues 22 to 42 (RTQFWLAFLLGASACVFFCFF) form a helical membrane-spanning segment. Over 43 to 95 (RKRWKVLYAPRTTIEGLNLPTLSSSYYKWLMDLVNIPDDVVQNCAGLDGYVFL) the chain is Cytoplasmic. A helical transmembrane segment spans residues 96–116 (LFFKMGIKFLSFASLLGVLII). Over 117–192 (MPVNKHFRGD…IPGLPQPGDG (76 aa)) the chain is Lumenal. Residues 193 to 213 (FLYLYVLFTYFISIFLLYVLF) traverse the membrane as a helical segment. At 214-444 (SSTKSIADIR…HKFFQGWFIT (231 aa)) the chain is on the cytoplasmic side. Residues 445–465 (LVTFMIILLWTVPVGAIAVFI) traverse the membrane as a helical segment. The Lumenal portion of the chain corresponds to 466 to 493 (NLDTIRRLWPELGRMIEDLPFLNSLLRT). Residues 494–514 (FLPTLVYSLFISISPFLFRWL) form a helical membrane-spanning segment. Residues 515 to 534 (SSMQGLSSRAEEEIYAVGKN) lie on the Cytoplasmic side of the membrane. A helical transmembrane segment spans residues 535–555 (YAYLFVNFFLVYVIAGSTSIW). Over 556–577 (ELAKDTTSFAHFLANRLPHQAQ) the chain is Lumenal. Residues 578 to 598 (FFIDLIVLQGIGMFPLKLIQL) traverse the membrane as a helical segment. Over 599 to 646 (GKLSSYFVRRSFVPYSIASKKFETPDSFSVGIFLPQPMFIMLICLCYS) the chain is Cytoplasmic. Residues 647-667 (IISPLILVFGLIYFIIGFLVY) form a helical membrane-spanning segment. Residues 668-687 (KYELIYQMEHPQHSTGELWS) lie on the Lumenal side of the membrane. Residues 688 to 708 (TIFLRMIFGCVIMQLTMMGLM) form a helical membrane-spanning segment. At 709 to 713 (SLRKA) the chain is on the cytoplasmic side. The helical transmembrane segment at 714 to 734 (YWLSTVIFPLLCFTVISAYNF) threads the bilayer. The Lumenal portion of the chain corresponds to 735 to 793 (STMIRSSMQFVSLYYIRTHQSNTLSSESESRNSESSGSYVHPGFDLSNEELPLIDLNTA). Residues 759 to 778 (SSESESRNSESSGSYVHPGF) are disordered.

This sequence belongs to the CSC1 (TC 1.A.17) family.

It is found in the vacuole membrane. In terms of biological role, acts as an osmosensitive calcium-permeable cation channel. The sequence is that of Calcium permeable stress-gated cation channel 1 from Schizosaccharomyces pombe (strain 972 / ATCC 24843) (Fission yeast).